The sequence spans 209 residues: Ribosomal RNA large subunit methyltransferase E (209 aa).

S-adenosyl-L-methionine-binding residues include Gly-63, Trp-65, Asp-83, Asp-99, and Asp-124. The active-site Proton acceptor is the Lys-164.

The protein belongs to the class I-like SAM-binding methyltransferase superfamily. RNA methyltransferase RlmE family.

The protein resides in the cytoplasm. The enzyme catalyses uridine(2552) in 23S rRNA + S-adenosyl-L-methionine = 2'-O-methyluridine(2552) in 23S rRNA + S-adenosyl-L-homocysteine + H(+). Its function is as follows. Specifically methylates the uridine in position 2552 of 23S rRNA at the 2'-O position of the ribose in the fully assembled 50S ribosomal subunit. In Shewanella halifaxensis (strain HAW-EB4), this protein is Ribosomal RNA large subunit methyltransferase E.